Reading from the N-terminus, the 441-residue chain is GTPase Der (441 aa).

EngA-type G domains lie at 4–169 (PVVA…PDSS) and 178–353 (PRVA…ENNS). Residues 10-17 (GRPNVGKS), 57-61 (DTGGI), 120-123 (NKVD), 184-191 (GKPNVGKS), 231-235 (DTAGL), and 296-299 (NKWD) contribute to the GTP site. One can recognise a KH-like domain in the interval 354–438 (MRVATGVLNE…ALKFITRERK (85 aa)).

The protein belongs to the TRAFAC class TrmE-Era-EngA-EngB-Septin-like GTPase superfamily. EngA (Der) GTPase family. As to quaternary structure, associates with the 50S ribosomal subunit.

In terms of biological role, GTPase that plays an essential role in the late steps of ribosome biogenesis. The sequence is that of GTPase Der from Agathobacter rectalis (strain ATCC 33656 / DSM 3377 / JCM 17463 / KCTC 5835 / VPI 0990) (Eubacterium rectale).